Here is a 90-residue protein sequence, read N- to C-terminus: Neuropeptide F (90 aa).

The first 27 residues, 1–27 (MTFSTSSSFSRRALVALLVCTLLIDLS), serve as a signal peptide directing secretion. The interval 54-90 (KHAQHARPRFGKRSYLNPAGYGQDEQEDDWQDSTFTR) is disordered. Basic residues predominate over residues 56–65 (AQHARPRFGK). F63 carries the phenylalanine amide modification. The propeptide occupies 67 to 90 (SYLNPAGYGQDEQEDDWQDSTFTR).

Belongs to the NPY family. As to expression, expressed in hemolymph, brain and midgut.

Its subcellular location is the secreted. In terms of biological role, an integral part of the sensory system that mediates food signaling, providing the neural basis for the regulation of food response; coordinates larval foraging and social behavior changes during development. May have a hormonal role in females. The protein is Neuropeptide F (npf) of Aedes aegypti (Yellowfever mosquito).